The following is a 306-amino-acid chain: Beta-lactamase (306 aa).

The N-terminal stretch at 1 to 34 (MNVKRKATLKFGICIGLLCVSFTGFNSLFGSTHA) is a signal peptide. Ser89 functions as the Acyl-ester intermediate in the catalytic mechanism. Substrate is bound at residue 251-253 (KSG).

This sequence belongs to the class-A beta-lactamase family.

It catalyses the reaction a beta-lactam + H2O = a substituted beta-amino acid. Its function is as follows. This protein is a beta-lactamase with a substrate specificity for penicillins. In Bacillus amyloliquefaciens (Bacillus velezensis), this protein is Beta-lactamase (penP).